The following is a 513-amino-acid chain: MQLNPSEISELIKSRISEMGVDSQVRNEGTVISVTDGICRVHGLSGVMQGEMLEFPNNTIGLALNLERDSVGAVVLGEYTHIKEGDPVKCTGRILEVPVGPELLGRVVNALGQPIDGKGPINTKLTDFIEKVAPGVIARQSVSQPVQTGLKAIDAMVPIGRGQRELIIGDRQTGKTAVAVDAIINQKGKGVYCVYVAIGQKASTIANVVRKLTELGAMEYTVVVAASASESAAMQYLSAYAGCTMGEYFRDRGEDALIVYDDLTKQAVAYRQISLLLRRPPGREAYPGDVFYLHSRLLERAARVNAEYVEKFTNGAVKGKTGSLTALPIIETQAGDVSAFVPTNVISITDGQIFLETDLFNAGVRPAINAGISVSRVGGAAQTKVIKKLSGGIRTDLAQYRELAAFAQFASDLDEATRKQLERGRRVTELCKQAQYKPLQVWEMAASLYAVNNGYFDDLEVKNVLAFEKGLQDHLKSKYADLVARIEETKDLSKDDEAALRAAIEDYKRSASF.

ATP is bound at residue 169 to 176; the sequence is GDRQTGKT.

Belongs to the ATPase alpha/beta chains family. F-type ATPases have 2 components, CF(1) - the catalytic core - and CF(0) - the membrane proton channel. CF(1) has five subunits: alpha(3), beta(3), gamma(1), delta(1), epsilon(1). CF(0) has three main subunits: a(1), b(2) and c(9-12). The alpha and beta chains form an alternating ring which encloses part of the gamma chain. CF(1) is attached to CF(0) by a central stalk formed by the gamma and epsilon chains, while a peripheral stalk is formed by the delta and b chains.

It is found in the cell membrane. The catalysed reaction is ATP + H2O + 4 H(+)(in) = ADP + phosphate + 5 H(+)(out). Its function is as follows. Produces ATP from ADP in the presence of a proton gradient across the membrane. The alpha chain is a regulatory subunit. This chain is ATP synthase subunit alpha, found in Polynucleobacter asymbioticus (strain DSM 18221 / CIP 109841 / QLW-P1DMWA-1) (Polynucleobacter necessarius subsp. asymbioticus).